The primary structure comprises 473 residues: MWTVVLGLATLFVAYYIHWINKWRDSKFNGVLPPGTMGLPLIGETIQLSRPSDSLDVHPFIQKKVERYGPIFKTCLAGRPVVVSADAEFNNYIMLQEGRAVEMWYLDTLSKFFGLDTEWLKALGLIHKYIRSITLNHFGAEALRERFLPFIEASSMEALHSWSTQPSVEVKNASALMVFRTSVNKMFGEDAKKLSGNIPGKFTKLLGGFLSLPLNFPGTTYHKCLKDMKEIQKKLREVVDDRLANVGPDVEDFLGQALKDKESEKFISEEFIIQLLFSISFASFESISTTLTLILKLLDEHPEVVKELEAEHEAIRKARADPDGPITWEEYKSMTFTLQVINETLRLGSVTPALLRKTVKDLQVKGYIIPEGWTIMLVTASRHRDPKVYKDPHIFNPWRWKDLDSITIQKNFMPFGGGLRHCAGAEYSKVYLCTFLHILCTKYRWTKLGGGTIARAHILSFEDGLHVKFTPKE.

The chain crosses the membrane as a helical span at residues V4–R24. C422 provides a ligand contact to heme.

The protein belongs to the cytochrome P450 family. The cofactor is heme. Highly expressed in young fruits 15 days after anthesis (15-DAA). Also observed in roots.

It is found in the membrane. The enzyme catalyses cucurbitadienol + 2 reduced [NADPH--hemoprotein reductase] + 2 O2 = 11-oxocucurbitadienol + 2 oxidized [NADPH--hemoprotein reductase] + 3 H2O + 2 H(+). The catalysed reaction is cucurbitadienol + reduced [NADPH--hemoprotein reductase] + O2 = 11-hydroxycucurbitadienol + oxidized [NADPH--hemoprotein reductase] + H2O + H(+). It catalyses the reaction 11-hydroxycucurbitadienol + reduced [NADPH--hemoprotein reductase] + O2 = 11-oxocucurbitadienol + oxidized [NADPH--hemoprotein reductase] + 2 H2O + H(+). It carries out the reaction (24R)-24,25-dihydroxycucurbitadienol + reduced [NADPH--hemoprotein reductase] + O2 = mogrol + oxidized [NADPH--hemoprotein reductase] + H2O + H(+). Its pathway is secondary metabolite biosynthesis; terpenoid biosynthesis. Functionally, hydroxylase involved in the biosynthesis of cucurbitacin and mogroside tetracyclic triterpene natural products (e.g. siamenoside I and mogrosides IV, V and VI). Cucurbitacins have cytotoxic properties and exhibit deterrent taste as a defense barrier against herbivores. Mogrosides are nonsugar highly oxygenated compounds used as high-intensity zero-calorie sweeteners; they also possess pharmacological properties such as regulating immunity, lowering blood sugar and lipid levels, protecting the liver, and acting as antioxidants and antitumor agents. Catalyzes the oxidation of cucurbitadienol at the C-11 position to produce 11-oxocucurbitadienol, a possible biosynthetic intermediate from cucurbitadienol to mogrol. Also mediates the conversion of 24,25-dihydroxycucurbitadienol to mogrol. The chain is Cucurbitadienol 11-hydroxylase from Siraitia grosvenorii (Monk's fruit).